We begin with the raw amino-acid sequence, 768 residues long: MASPSSLLFGEAVILPVYDLDAQQQQRCAKGGRMEARELLSLQIDIFSCLALNRSLGGVTANLDALDAALRPEPIFYTCRAVRRLLLGACWYPVVVENEEGEGEGEREVDEAAAKEEPGNNRIGTVPGEAYEGAGLIITSDGMYINKKIQTHSYLHTIYSLESTDNAREEWRCRARAVFCHSLSLTLINPQLMFRIISRYLSINQFEECFSSFVEGVARDRALRATCTRNYFALLGHLKSPAPPLYSPPASSARAHELHAHGVLSFVADWPDLEALAPLRAKIAENLVAFPQTLASLCALPYCREVSLEAEGFHENQALVSMAMPYLKVAVYKKDPGARPGRVVAREGGGVERWYVYPPRMAVYRITMCLAAMGPGARHVPSEAPRPSSEGPGLPHALVSLLNRGKYAPRETRATMTLPLGLREGALFEPGERRRPLADSFAPVSSLSVHGFGINVFNTNMVINTKIACDPRGARYRTVMDIPRLTNNFVIRKYSVKEPSFTVSVFYSDAACASGTAINMNISGDYLSFLYAVGNLKCFMPVRTVFPISVANWNSTLDLQGLENQQLVRRGRSDVFWTTNFPSAVSTQRGSNVSWFKAATATISKVHGPGLVARVYSETAPILTNPRARLNLVKNAIFSTVETRNKAQIQTIHKRFLECLYECASFGRLDVRAVLRLARGGYFDFSKRIISHTKNKHECAVLGYKKCNLIPKILCDKKKVRLDELGRNANFMTFLSSVAHRNRKLKNRMLRHISRTMGLSWKLHLHKN.

A disordered region spans residues 102–125; that stretch reads EGEGEREVDEAAAKEEPGNNRIGT. Basic and acidic residues predominate over residues 104 to 119; it reads EGEREVDEAAAKEEPG.

The protein belongs to the herpesviridae UL87 family.

In Equine herpesvirus 2 (strain 86/87) (EHV-2), this protein is Gene 24 protein (24).